Consider the following 525-residue polypeptide: GMP synthase [glutamine-hydrolyzing] (525 aa).

The Glutamine amidotransferase type-1 domain maps to 9–207 (RILILDFGSQ…VRDICQCEAL (199 aa)). Cys86 functions as the Nucleophile in the catalytic mechanism. Residues His181 and Glu183 contribute to the active site. The GMPS ATP-PPase domain maps to 208–400 (WTPAKIIDDA…LGLPYDMLYR (193 aa)). An ATP-binding site is contributed by 235-241 (SGGVDSS).

As to quaternary structure, homodimer.

It carries out the reaction XMP + L-glutamine + ATP + H2O = GMP + L-glutamate + AMP + diphosphate + 2 H(+). It functions in the pathway purine metabolism; GMP biosynthesis; GMP from XMP (L-Gln route): step 1/1. Its function is as follows. Catalyzes the synthesis of GMP from XMP. This Shigella boydii serotype 18 (strain CDC 3083-94 / BS512) protein is GMP synthase [glutamine-hydrolyzing].